The following is a 74-amino-acid chain: Lambda-hexatoxin-Hv1d (74 aa).

The first 22 residues, 1-22 (MNTATCFIVLLVVATVIGGIEA), serve as a signal peptide directing secretion. Residues 23–35 (GESDMRKDVMGLF) constitute a propeptide that is removed on maturation. 4 disulfide bridges follow: Cys40–Cys54, Cys47–Cys59, Cys50–Cys51, and Cys53–Cys69.

It belongs to the neurotoxin 11 (kappa toxin) family. In terms of tissue distribution, expressed by the venom gland.

It is found in the secreted. Its function is as follows. This excitatory toxin inhibits insect calcium-activated potassium (KCa) channels (Slo-type). This Hadronyche versuta (Blue mountains funnel-web spider) protein is Lambda-hexatoxin-Hv1d.